The chain runs to 101 residues: NADH-quinone oxidoreductase subunit K (101 aa).

Helical transmembrane passes span 2 to 22 (ISLNHYLIVAALMFVIGLVGV), 29 to 49 (IMLFFSTEILLNAANVALVAI), and 63 to 83 (MFIIAIAASEMAVGLGLLILW).

This sequence belongs to the complex I subunit 4L family. In terms of assembly, NDH-1 is composed of 14 different subunits. Subunits NuoA, H, J, K, L, M, N constitute the membrane sector of the complex.

The protein resides in the cell inner membrane. It catalyses the reaction a quinone + NADH + 5 H(+)(in) = a quinol + NAD(+) + 4 H(+)(out). NDH-1 shuttles electrons from NADH, via FMN and iron-sulfur (Fe-S) centers, to quinones in the respiratory chain. The immediate electron acceptor for the enzyme in this species is believed to be ubiquinone. Couples the redox reaction to proton translocation (for every two electrons transferred, four hydrogen ions are translocated across the cytoplasmic membrane), and thus conserves the redox energy in a proton gradient. The polypeptide is NADH-quinone oxidoreductase subunit K (Campylobacter hominis (strain ATCC BAA-381 / DSM 21671 / CCUG 45161 / LMG 19568 / NCTC 13146 / CH001A)).